Here is a 215-residue protein sequence, read N- to C-terminus: Small ribosomal subunit protein uS3c (215 aa).

The region spanning 43–116 (IKNYIKKNMK…KLNMAITRIA (74 aa)) is the KH type-2 domain.

Belongs to the universal ribosomal protein uS3 family. As to quaternary structure, part of the 30S ribosomal subunit.

The protein localises to the plastid. Its subcellular location is the chloroplast. In Morus indica (Mulberry), this protein is Small ribosomal subunit protein uS3c (rps3).